The chain runs to 342 residues: L-threonine 3-dehydrogenase (342 aa).

Cys39 serves as a coordination point for Zn(2+). Active-site charge relay system residues include Thr41 and His44. Zn(2+) contacts are provided by His64, Glu65, Cys94, Cys97, Cys100, and Cys108. Residues Ile176, Asp196, Arg201, 263–265 (LGI), and 287–288 (IY) contribute to the NAD(+) site.

The protein belongs to the zinc-containing alcohol dehydrogenase family. As to quaternary structure, homotetramer. It depends on Zn(2+) as a cofactor.

It localises to the cytoplasm. The catalysed reaction is L-threonine + NAD(+) = (2S)-2-amino-3-oxobutanoate + NADH + H(+). The protein operates within amino-acid degradation; L-threonine degradation via oxydo-reductase pathway; glycine from L-threonine: step 1/2. In terms of biological role, catalyzes the NAD(+)-dependent oxidation of L-threonine to 2-amino-3-ketobutyrate. This chain is L-threonine 3-dehydrogenase, found in Protochlamydia amoebophila (strain UWE25).